A 45-amino-acid polypeptide reads, in one-letter code: Large ribosomal subunit protein bL34 (45 aa).

Belongs to the bacterial ribosomal protein bL34 family.

This chain is Large ribosomal subunit protein bL34, found in Arthrobacter sp. (strain FB24).